The following is a 140-amino-acid chain: Midkine (140 aa).

Residues 1–20 (MQHRSFFLLALVALLAVTTA) form the signal peptide. 5 cysteine pairs are disulfide-bonded: cysteine 34/cysteine 58, cysteine 42/cysteine 67, cysteine 49/cysteine 71, cysteine 81/cysteine 113, and cysteine 91/cysteine 123.

The protein belongs to the pleiotrophin family. In terms of assembly, homodimer. Interacts with ALK. Interacts with LRP1; promotes neuronal survival. Interacts with LRP2. Interacts with NCAM1. Interacts (via C-terminal) with PTPRZ1 (via chondroitin sulfate chains); this interaction is inhibited by PTN; this interaction promotes neuronal migration. Interacts with NCL; this interaction promotes NCL clustering and lateral movements of this complex into lipid rafts leading to MDK internalization. Interacts with LRP6 and LRP8: this interaction is calcium dependent. Interacts with ITGA4. Interacts with ITGA6. Interacts with ITGB1. Interacts with ITGA4:ITGB1 complex; this interaction mediates MDK-induced osteoblast cells migration through PXN phosphorylation. Interacts with ITGA6:ITGB1 complex; this interaction mediates MDK-induced neurite outgrowth. Interacts with NOTCH2; this interactio mediates a nuclear accumulation of NOTCH2 and therefore activation of NOTCH2 signaling leading to interaction between HES1 and STAT3. Interacts with GPC2 (via heparan sulfate chain); this interaction is inhibited by heparin followed by chondroitin sulfate E; this interaction induces GPC2 clustering through heparan sulfate chain; this interaction induces neuronal cell adhesion and neurite outgrowth. Interacts with SDC3; this interaction induces SDC3 clustering; this interaction induces neuronal cell adhesion and neurite outgrowth. Interacts with SDC1. Interacts with CSPG5; this interaction promotes elongation of oligodendroglial precursor-like cells. As to expression, expressed at a low level in arteries, and at higher levels in newly formed neointima. In brain, expressed in the caudate nucleus and the brain stem.

It is found in the secreted. Its function is as follows. Developmentally regulated, secreted growth factor homologous to pleiotrophin (PTN), which has heparin binding activity. Binds anaplastic lymphoma kinase (ALK) which induces ALK activation and subsequent phosphorylation of the insulin receptor substrate (IRS1), followed by the activation of mitogen-activated protein kinase (MAPK) and PI3-kinase, and the induction of cell proliferation. Involved in neointima formation after arterial injury, possibly by mediating leukocyte recruitment. Also involved in early fetal adrenal gland development. Secreted protein that functions as a cytokine and growth factor and mediates its signal through cell-surface proteoglycan and non-proteoglycan receptors. Binds cell-surface proteoglycan receptors via their chondroitin sulfate (CS) groups. Thereby regulates many processes like inflammatory response, cell proliferation, cell adhesion, cell growth, cell survival, tissue regeneration, cell differentiation and cell migration. Participates in inflammatory processes by exerting two different activities. Firstly, mediates neutrophils and macrophages recruitment to the sites of inflammation both by direct action by cooperating namely with ITGB2 via LRP1 and by inducing chemokine expression. This inflammation can be accompanied by epithelial cell survival and smooth muscle cell migration after renal and vessel damage, respectively. Secondly, suppresses the development of tolerogenic dendric cells thereby inhibiting the differentiation of regulatory T cells and also promote T cell expansion through NFAT signaling and Th1 cell differentiation. Promotes tissue regeneration after injury or trauma. After heart damage negatively regulates the recruitment of inflammatory cells and mediates cell survival through activation of anti-apoptotic signaling pathways via MAPKs and AKT pathways through the activation of angiogenesis. Also facilitates liver regeneration as well as bone repair by recruiting macrophage at trauma site and by promoting cartilage development by facilitating chondrocyte differentiation. Plays a role in brain by promoting neural precursor cells survival and growth through interaction with heparan sulfate proteoglycans. Binds PTPRZ1 and promotes neuronal migration and embryonic neurons survival. Binds SDC3 or GPC2 and mediates neurite outgrowth and cell adhesion. Binds chondroitin sulfate E and heparin leading to inhibition of neuronal cell adhesion induced by binding with GPC2. Binds CSPG5 and promotes elongation of oligodendroglial precursor-like cells. Also binds ITGA6:ITGB1 complex; this interaction mediates MDK-induced neurite outgrowth. Binds LRP1; promotes neuronal survival. Binds ITGA4:ITGB1 complex; this interaction mediates MDK-induced osteoblast cells migration through PXN phosphorylation. Binds anaplastic lymphoma kinase (ALK) which induces ALK activation and subsequent phosphorylation of the insulin receptor substrate (IRS1), followed by the activation of mitogen-activated protein kinase (MAPK) and PI3-kinase, and the induction of cell proliferation. Promotes epithelial to mesenchymal transition through interaction with NOTCH2. During arteriogenesis, plays a role in vascular endothelial cell proliferation by inducing VEGFA expression and release which in turn induces nitric oxide synthase expression. Moreover activates vasodilation through nitric oxide synthase activation. Negatively regulates bone formation in response to mechanical load by inhibiting Wnt/beta-catenin signaling in osteoblasts. In addition plays a role in hippocampal development, working memory, auditory response, early fetal adrenal gland development and the female reproductive system. This is Midkine from Rattus norvegicus (Rat).